The primary structure comprises 294 residues: tRNA pseudouridine synthase B (294 aa).

The active-site Nucleophile is aspartate 40.

It belongs to the pseudouridine synthase TruB family. Type 1 subfamily.

The enzyme catalyses uridine(55) in tRNA = pseudouridine(55) in tRNA. Functionally, responsible for synthesis of pseudouridine from uracil-55 in the psi GC loop of transfer RNAs. This chain is tRNA pseudouridine synthase B, found in Synechococcus elongatus (strain ATCC 33912 / PCC 7942 / FACHB-805) (Anacystis nidulans R2).